The primary structure comprises 141 residues: Putative nickel-responsive regulator (141 aa).

Ni(2+) contacts are provided by histidine 83, histidine 94, histidine 96, and cysteine 102.

It belongs to the transcriptional regulatory CopG/NikR family. Requires Ni(2+) as cofactor.

Transcriptional regulator. The chain is Putative nickel-responsive regulator from Methanopyrus kandleri (strain AV19 / DSM 6324 / JCM 9639 / NBRC 100938).